The following is a 278-amino-acid chain: S-formylglutathione hydrolase YeiG (278 aa).

Catalysis depends on charge relay system residues serine 145, aspartate 223, and histidine 256.

The protein belongs to the esterase D family.

It carries out the reaction S-formylglutathione + H2O = formate + glutathione + H(+). Its function is as follows. Serine hydrolase involved in the detoxification of formaldehyde. Hydrolyzes S-formylglutathione to glutathione and formate. The chain is S-formylglutathione hydrolase YeiG (yeiG) from Shigella dysenteriae serotype 1 (strain Sd197).